The sequence spans 102 residues: Aspartyl/glutamyl-tRNA(Asn/Gln) amidotransferase subunit C (102 aa).

This sequence belongs to the GatC family. In terms of assembly, heterotrimer of A, B and C subunits.

It catalyses the reaction L-glutamyl-tRNA(Gln) + L-glutamine + ATP + H2O = L-glutaminyl-tRNA(Gln) + L-glutamate + ADP + phosphate + H(+). It carries out the reaction L-aspartyl-tRNA(Asn) + L-glutamine + ATP + H2O = L-asparaginyl-tRNA(Asn) + L-glutamate + ADP + phosphate + 2 H(+). Its function is as follows. Allows the formation of correctly charged Asn-tRNA(Asn) or Gln-tRNA(Gln) through the transamidation of misacylated Asp-tRNA(Asn) or Glu-tRNA(Gln) in organisms which lack either or both of asparaginyl-tRNA or glutaminyl-tRNA synthetases. The reaction takes place in the presence of glutamine and ATP through an activated phospho-Asp-tRNA(Asn) or phospho-Glu-tRNA(Gln). The chain is Aspartyl/glutamyl-tRNA(Asn/Gln) amidotransferase subunit C from Leuconostoc citreum (strain KM20).